Here is a 107-residue protein sequence, read N- to C-terminus: C-X-C motif chemokine 3 (107 aa).

Residues 1 to 34 form the signal peptide; it reads MAHATLSAAPSNPRLLRVALLLLLLVAASRRAAG. 2 disulfide bridges follow: Cys43–Cys69 and Cys45–Cys85.

The protein belongs to the intercrine alpha (chemokine CxC) family. N-terminal processed form GRO-gamma(5-73) is produced by proteolytic cleavage after secretion from peripheral blood monocytes.

It is found in the secreted. Ligand for CXCR2. Has chemotactic activity for neutrophils. May play a role in inflammation and exert its effects on endothelial cells in an autocrine fashion. In vitro, the processed form GRO-gamma(5-73) shows a fivefold higher chemotactic activity for neutrophilic granulocytes. This Homo sapiens (Human) protein is C-X-C motif chemokine 3 (CXCL3).